Consider the following 269-residue polypeptide: MDTILNRILTHKRVEVERQRIKIPDAQIRARAEAAPPPRDFAAALRAHRPIALIAEVKKASPSKGVLIENFDPLALAHTYASNGASAISVLTDVRFFQGSLKHLEGIRAMVDRGAVPPLPLLRKDFIIDPYQVAEARAYGADALLLIVAALDDETLAALLALTHSFGMQALVEVHNEDELRRALDAGASIIGVNNRDLHSFTTTLETTRRLAALLPSSNRPLLVSESGIFTAEHVALVRSWGADAILVGEALVTAPDISSKVRELGGGS.

The protein belongs to the TrpC family.

The catalysed reaction is 1-(2-carboxyphenylamino)-1-deoxy-D-ribulose 5-phosphate + H(+) = (1S,2R)-1-C-(indol-3-yl)glycerol 3-phosphate + CO2 + H2O. Its pathway is amino-acid biosynthesis; L-tryptophan biosynthesis; L-tryptophan from chorismate: step 4/5. This is Indole-3-glycerol phosphate synthase from Roseiflexus sp. (strain RS-1).